We begin with the raw amino-acid sequence, 285 residues long: Urease accessory protein UreD (285 aa).

The protein belongs to the UreD family. As to quaternary structure, ureD, UreF and UreG form a complex that acts as a GTP-hydrolysis-dependent molecular chaperone, activating the urease apoprotein by helping to assemble the nickel containing metallocenter of UreC. The UreE protein probably delivers the nickel.

The protein resides in the cytoplasm. Required for maturation of urease via the functional incorporation of the urease nickel metallocenter. This is Urease accessory protein UreD from Cytophaga hutchinsonii (strain ATCC 33406 / DSM 1761 / CIP 103989 / NBRC 15051 / NCIMB 9469 / D465).